A 315-amino-acid polypeptide reads, in one-letter code: Prephenate dehydratase (315 aa).

Residues 3-190 (RIAYLGPQGT…ARTRFVLVGR (188 aa)) form the Prephenate dehydratase domain. Residues 204–281 (SVALRLPNTP…EDVRYLGSWP (78 aa)) form the ACT domain.

Homodimer.

The enzyme catalyses prephenate + H(+) = 3-phenylpyruvate + CO2 + H2O. It functions in the pathway amino-acid biosynthesis; L-phenylalanine biosynthesis; phenylpyruvate from prephenate: step 1/1. This chain is Prephenate dehydratase (pheA), found in Mycobacterium sp. (strain KMS).